Reading from the N-terminus, the 501-residue chain is Lycopene beta cyclase, chloroplastic (501 aa).

The N-terminal 48 residues, M1–S48, are a transit peptide targeting the chloroplast. Residue V49 is modified to N-acetylvaline. L85–P113 lines the NAD(+) pocket.

The protein belongs to the lycopene cyclase family.

It localises to the plastid. The protein resides in the chloroplast. It carries out the reaction a carotenoid psi-end group = a carotenoid beta-end derivative. It participates in carotenoid biosynthesis; beta-carotene biosynthesis. It functions in the pathway carotenoid biosynthesis; beta-zeacarotene biosynthesis. Its function is as follows. Involved in carotenoid biosynthesis. Catalyzes the double cyclization reaction which converts lycopene to beta-carotene and neurosporene to beta-zeacarotene. Major lycopene beta-cyclase that does not seem to be involved in neoxanthin synthesis. Involved in salt tolerance improvement by increasing synthesis of carotenoids, which impairs reactive oxygen species (ROS) and protects the photosynthetic system under salt stress. This is Lycopene beta cyclase, chloroplastic from Arabidopsis thaliana (Mouse-ear cress).